The sequence spans 778 residues: Ent-trachylobane synthase KSL2, chloroplastic (778 aa).

The N-terminal 37 residues, 1-37 (MLLTCTNSLKISSQAKEWESKTLTGMSLEQLNKRIRI), are a transit peptide targeting the chloroplast. Positions 529, 533, 672, 673, and 680 each coordinate Mg(2+). The short motif at 529 to 533 (DDFFD) is the DDXXD motif element.

Belongs to the terpene synthase family. The cofactor is Mg(2+).

The protein localises to the plastid. It localises to the chloroplast. The catalysed reaction is ent-copalyl diphosphate = ent-trachylobane + diphosphate. It carries out the reaction ent-copalyl diphosphate = ent-kaur-16-ene + diphosphate. It functions in the pathway secondary metabolite biosynthesis; terpenoid biosynthesis. Diterpene cyclase involved in the biosynthesis of labdane-related diterpenoids (LRDs) natural products. Catalyzes the cyclization of ent-CDP into ent-trachylobane as a major and ent-kaurene as a minor product. The protein is Ent-trachylobane synthase KSL2, chloroplastic of Ricinus communis (Castor bean).